Reading from the N-terminus, the 195-residue chain is Imidazoleglycerol-phosphate dehydratase (195 aa).

This sequence belongs to the imidazoleglycerol-phosphate dehydratase family.

Its subcellular location is the cytoplasm. The catalysed reaction is D-erythro-1-(imidazol-4-yl)glycerol 3-phosphate = 3-(imidazol-4-yl)-2-oxopropyl phosphate + H2O. It participates in amino-acid biosynthesis; L-histidine biosynthesis; L-histidine from 5-phospho-alpha-D-ribose 1-diphosphate: step 6/9. The polypeptide is Imidazoleglycerol-phosphate dehydratase (Polynucleobacter asymbioticus (strain DSM 18221 / CIP 109841 / QLW-P1DMWA-1) (Polynucleobacter necessarius subsp. asymbioticus)).